Here is a 165-residue protein sequence, read N- to C-terminus: Phosphopantetheine adenylyltransferase (165 aa).

Substrate is bound at residue Thr-11. ATP contacts are provided by residues 11 to 12 (TF) and His-19. Substrate contacts are provided by Lys-43, Val-75, and Arg-89. ATP-binding positions include 90–92 (GLR), Glu-100, and 125–131 (YQFISST).

This sequence belongs to the bacterial CoaD family. In terms of assembly, homohexamer. The cofactor is Mg(2+).

Its subcellular location is the cytoplasm. It carries out the reaction (R)-4'-phosphopantetheine + ATP + H(+) = 3'-dephospho-CoA + diphosphate. It participates in cofactor biosynthesis; coenzyme A biosynthesis; CoA from (R)-pantothenate: step 4/5. Its function is as follows. Reversibly transfers an adenylyl group from ATP to 4'-phosphopantetheine, yielding dephospho-CoA (dPCoA) and pyrophosphate. In Acidovorax ebreus (strain TPSY) (Diaphorobacter sp. (strain TPSY)), this protein is Phosphopantetheine adenylyltransferase.